The sequence spans 108 residues: Cell division protein FtsL (108 aa).

The Cytoplasmic segment spans residues 1 to 24 (MSKDTASQPSLTKLIGLDIFGVGR). Residues 25–45 (LHAILLICIFLSAIGVVLATH) form a helical membrane-spanning segment. The Periplasmic portion of the chain corresponds to 46 to 108 (NTRQMTVQRE…PDKEVIIKLR (63 aa)).

The protein belongs to the FtsL family. In terms of assembly, part of a complex composed of FtsB, FtsL and FtsQ.

It is found in the cell inner membrane. Functionally, essential cell division protein. May link together the upstream cell division proteins, which are predominantly cytoplasmic, with the downstream cell division proteins, which are predominantly periplasmic. In Aliivibrio fischeri (strain ATCC 700601 / ES114) (Vibrio fischeri), this protein is Cell division protein FtsL.